The following is a 342-amino-acid chain: N-acetyl-gamma-glutamyl-phosphate reductase (342 aa).

Cysteine 149 is an active-site residue.

The protein belongs to the NAGSA dehydrogenase family. Type 1 subfamily.

It localises to the cytoplasm. The catalysed reaction is N-acetyl-L-glutamate 5-semialdehyde + phosphate + NADP(+) = N-acetyl-L-glutamyl 5-phosphate + NADPH + H(+). It participates in amino-acid biosynthesis; L-arginine biosynthesis; N(2)-acetyl-L-ornithine from L-glutamate: step 3/4. Catalyzes the NADPH-dependent reduction of N-acetyl-5-glutamyl phosphate to yield N-acetyl-L-glutamate 5-semialdehyde. This Laribacter hongkongensis (strain HLHK9) protein is N-acetyl-gamma-glutamyl-phosphate reductase.